Reading from the N-terminus, the 551-residue chain is HTH-type transcriptional regulator SgrR (551 aa).

The region spanning 1–116 is the HTH marR-type domain; that stretch reads MPSARLQQQF…LVSHLGRSFR (116 aa). The H-T-H motif DNA-binding region spans 26-49; the sequence is LNELAALLSCSRRHMRTLLNTMQD. The tract at residues 163–492 is solute-binding; that stretch reads ELEADIAHHW…IDWQADAARW (330 aa).

In terms of biological role, activates the small RNA gene sgrS under glucose-phosphate stress conditions as well as yfdZ. Represses its own transcription under both stress and non-stress conditions. Might act as a sensor of the intracellular accumulation of phosphoglucose by binding these molecules in its C-terminal solute-binding domain. The sequence is that of HTH-type transcriptional regulator SgrR from Escherichia coli O1:K1 / APEC.